We begin with the raw amino-acid sequence, 238 residues long: Probable transcriptional regulatory protein SpyM51586 (238 aa).

This sequence belongs to the TACO1 family. YeeN subfamily.

Its subcellular location is the cytoplasm. In Streptococcus pyogenes serotype M5 (strain Manfredo), this protein is Probable transcriptional regulatory protein SpyM51586.